The chain runs to 316 residues: Biotin synthase (316 aa).

The Radical SAM core domain occupies 42–268; that stretch reads LCGESVDLCT…INPTAYIRMA (227 aa). [4Fe-4S] cluster-binding residues include Cys60, Cys64, and Cys67. Positions 104, 136, 196, and 266 each coordinate [2Fe-2S] cluster.

This sequence belongs to the radical SAM superfamily. Biotin synthase family. In terms of assembly, homodimer. [4Fe-4S] cluster serves as cofactor. It depends on [2Fe-2S] cluster as a cofactor.

It carries out the reaction (4R,5S)-dethiobiotin + (sulfur carrier)-SH + 2 reduced [2Fe-2S]-[ferredoxin] + 2 S-adenosyl-L-methionine = (sulfur carrier)-H + biotin + 2 5'-deoxyadenosine + 2 L-methionine + 2 oxidized [2Fe-2S]-[ferredoxin]. Its pathway is cofactor biosynthesis; biotin biosynthesis; biotin from 7,8-diaminononanoate: step 2/2. Catalyzes the conversion of dethiobiotin (DTB) to biotin by the insertion of a sulfur atom into dethiobiotin via a radical-based mechanism. The protein is Biotin synthase of Clostridium beijerinckii (strain ATCC 51743 / NCIMB 8052) (Clostridium acetobutylicum).